The following is a 210-amino-acid chain: Putative methyltransferase ECU09_1500 (210 aa).

It belongs to the methyltransferase superfamily.

The chain is Putative methyltransferase ECU09_1500 from Encephalitozoon cuniculi (strain GB-M1) (Microsporidian parasite).